The following is a 524-amino-acid chain: Tyrosine-protein kinase HCK (524 aa).

2 disordered regions span residues 1-20 (MGGRSSCEDPGCPRGEGRVP) and 35-71 (KASKIEPNANQKGPVYVPDPTSPKKLGPNSINSLPPG). Glycine 2 carries the N-myristoyl glycine lipid modification. Residue glycine 3 is the site of S-palmitoyl cysteine attachment. Phosphotyrosine; by autocatalysis is present on tyrosine 50. The SH3 domain maps to 76 to 136 (SEDTIVVALY…PSNYVARVNS (61 aa)). An SH2 domain is found at 142–239 (WFFKGISRKD…GLCQKLSVPC (98 aa)). Phosphothreonine is present on threonine 200. Tyrosine 207 is subject to Phosphotyrosine. The Protein kinase domain occupies 260–513 (LQMEKKLGAG…YIQSVLDDFY (254 aa)). Residues 266 to 274 (LGAGQFGEV) and lysine 288 contribute to the ATP site. Aspartate 379 (proton acceptor) is an active-site residue. Tyrosine 409 is subject to Phosphotyrosine; by autocatalysis. A Phosphoserine modification is found at serine 460. The residue at position 520 (tyrosine 520) is a Phosphotyrosine.

It belongs to the protein kinase superfamily. Tyr protein kinase family. SRC subfamily. Interacts with ADAM15. Interacts with FASLG. Interacts with ARRB1 and ARRB2. Interacts with FCGR1A; the interaction may be indirect. Interacts with IL6ST. Interacts (via SH3 domain) with ELMO1. Interacts (via SH3 domain) with TP73. Interacts with YAP1. Interacts with ABL1 and ITGB1, and thereby recruits ABL1 to activated ITGB1. Interacts (via SH2 domain) with FLT3 (tyrosine phosphorylated). Interacts with CBL. Interacts with VAV1, WAS and RAPGEF1. Interacts (via SH3 domain) with WDCP. Phosphorylated on several tyrosine residues. Autophosphorylated. Becomes rapidly phosphorylated upon activation of the immunoglobulin receptors FCGR1A and FCGR2A. Phosphorylation at Tyr-409 increases kinase activity. Phosphorylation at Tyr-520 inhibits kinase activity. Kinase activity is not required for phosphorylation at Tyr-520, suggesting that this site may be a target of other kinases. In terms of processing, ubiquitinated by CBL, leading to its degradation via the proteasome. Post-translationally, isoform 2 palmitoylation at position 2 requires prior myristoylation. Palmitoylation at position 3 is required for caveolar localization of isoform 2. As to expression, expressed strongly in spleen and at very low levels in thymus.

The protein localises to the cytoplasmic vesicle. It localises to the secretory vesicle. The protein resides in the cytoplasm. It is found in the cytosol. Its subcellular location is the membrane. The protein localises to the caveola. It localises to the lysosome. The protein resides in the cell projection. It is found in the podosome membrane. Its subcellular location is the cell membrane. The protein localises to the cell junction. It localises to the focal adhesion. The protein resides in the cytoskeleton. It is found in the golgi apparatus. Its subcellular location is the nucleus. The catalysed reaction is L-tyrosyl-[protein] + ATP = O-phospho-L-tyrosyl-[protein] + ADP + H(+). Subject to autoinhibition, mediated by intramolecular interactions involving the SH2 and SH3 domains. Kinase activity is also regulated by phosphorylation at regulatory tyrosine residues. Phosphorylation at Tyr-409 is required for optimal activity. Phosphorylation at Tyr-520 inhibits kinase activity. Functionally, non-receptor tyrosine-protein kinase found in hematopoietic cells that transmits signals from cell surface receptors and plays an important role in the regulation of innate immune responses, including neutrophil, monocyte, macrophage and mast cell functions, phagocytosis, cell survival and proliferation, cell adhesion and migration. Acts downstream of receptors that bind the Fc region of immunoglobulins, such as FCGR1A and FCGR2A, but also CSF3R, PLAUR, the receptors for IFNG, IL2, IL6 and IL8, and integrins, such as ITGB1 and ITGB2. During the phagocytic process, mediates mobilization of secretory lysosomes, degranulation, and activation of NADPH oxidase to bring about the respiratory burst. Plays a role in the release of inflammatory molecules. Promotes reorganization of the actin cytoskeleton and actin polymerization, formation of podosomes and cell protrusions. Inhibits TP73-mediated transcription activation and TP73-mediated apoptosis. Phosphorylates CBL in response to activation of immunoglobulin gamma Fc region receptors. Phosphorylates ADAM15, BCR, ELMO1, FCGR2A, GAB1, GAB2, RAPGEF1, STAT5B, TP73, VAV1 and WAS. This Rattus norvegicus (Rat) protein is Tyrosine-protein kinase HCK (Hck).